A 555-amino-acid chain; its full sequence is Hydroxylamine reductase (555 aa).

[4Fe-4S] cluster is bound by residues Cys5, Cys8, Cys17, and Cys23. Residues His248, Glu272, Cys316, Cys408, Cys436, Cys461, Glu496, and Lys498 each coordinate hybrid [4Fe-2O-2S] cluster. Cys408 is modified (cysteine persulfide).

Belongs to the HCP family. [4Fe-4S] cluster is required as a cofactor. Hybrid [4Fe-2O-2S] cluster serves as cofactor.

It localises to the cytoplasm. The catalysed reaction is A + NH4(+) + H2O = hydroxylamine + AH2 + H(+). In terms of biological role, catalyzes the reduction of hydroxylamine to form NH(3) and H(2)O. In Halothermothrix orenii (strain H 168 / OCM 544 / DSM 9562), this protein is Hydroxylamine reductase.